The following is a 314-amino-acid chain: MTSMVEIQNEIERVTALAVKYISENKDSLVVFVGQIDYNGYDAGKLLSILKEKAKGRDFGRDLCYLLVMRYTRGTGFVRDVRKKIKVAAGADTAYEIVTHYGVVQSVGDNADAITLGRLAALFPYVSMNIVKSVSTGAKLALDTSDLGTSGLDILLWDFVPQFINLDSVDAPYCNKKNTSNILFSLHLLQGALTTRKTMPDQKKKKDNLTTDFDLLKYTAELLVITCSAKNLTDNKKSTYRKKLVEPFRENEDYKADFWTALGKLSTGCLKKMKKDAQNYLKDRTTVLKLMVDNCSGTDDEAAKAIKDYLTVDD.

N-acetylmethionine; by host is present on M1. Residues Y38, Y41, R118, K237, and S266 each contribute to the RNA site.

It belongs to the tenuiviruses nucleocapsid protein family.

The protein localises to the virion. It is found in the host cytoplasm. Encapsidates the genome, protecting it from nucleases. The encapsidated genomic RNA is termed the nucleocapsid (NC), and serves as template for viral transcription and replication. This chain is Nucleoprotein, found in Wheat yellow head virus (WYHV).